A 189-amino-acid polypeptide reads, in one-letter code: NADH-quinone oxidoreductase subunit B (189 aa).

C39, C40, C104, and C135 together coordinate [4Fe-4S] cluster.

This sequence belongs to the complex I 20 kDa subunit family. NDH-1 is composed of 14 different subunits. Subunits NuoB, C, D, E, F, and G constitute the peripheral sector of the complex. Requires [4Fe-4S] cluster as cofactor.

It is found in the cell inner membrane. The enzyme catalyses a quinone + NADH + 5 H(+)(in) = a quinol + NAD(+) + 4 H(+)(out). In terms of biological role, NDH-1 shuttles electrons from NADH, via FMN and iron-sulfur (Fe-S) centers, to quinones in the respiratory chain. The immediate electron acceptor for the enzyme in this species is believed to be a menaquinone. Couples the redox reaction to proton translocation (for every two electrons transferred, four hydrogen ions are translocated across the cytoplasmic membrane), and thus conserves the redox energy in a proton gradient. The protein is NADH-quinone oxidoreductase subunit B of Chlorobaculum tepidum (strain ATCC 49652 / DSM 12025 / NBRC 103806 / TLS) (Chlorobium tepidum).